A 492-amino-acid chain; its full sequence is MRGLGPGLRARRLLPLRSPPRPPGPRGRRLCGGLAASAMDELLRRAVPPTPAYELREKTPAPAEGQCADFVSFYGGLAEASQRAELLGRLAQGFGVDHGQVAEQSAGVLQLRQQAREAAVLLQAEDRLRYALVPRYRGLFHHISKLDGGVRFLVQLRADLLEAQALKLVEGPHVREMNGVLKSMLSEWFSSGFLNLERVTWHSPCEVLQKISECEAVHPVKNWMDMKRRVGPYRRCYFFSHCSTPGEPLVVLHVALTGDISNNIQGIVKECPPTETEERNRIAAAIFYSISLTQQGLQGVELGTFLIKRVVKELQKEFPQLGAFSSLSPIPGFTKWLLGLLNVQGKEHGRNELFTDSECQEISAVTGNPVHESLKGFLSSGEWVKSEKLTQALQGPLMRLCAWYLYGEKHRGYALNPVANFHLQNGAVMWRINWMADSSLKGLTSSCGLMVNYRYYLEETGPNSISYLGSKNIKASEQILSLVAQFQNNSKL.

A disordered region spans residues 1-28 (MRGLGPGLRARRLLPLRSPPRPPGPRGR). The transit peptide at 1 to 38 (MRGLGPGLRARRLLPLRSPPRPPGPRGRRLCGGLAASA) directs the protein to the mitochondrion. The tract at residues 39 to 189 (MDELLRRAVP…VLKSMLSEWF (151 aa)) is alpha-helical domain. Lysine 58 carries the post-translational modification N6-acetyllysine. At lysine 167 the chain carries N6-acetyllysine; alternate. Lysine 167 is subject to N6-succinyllysine; alternate. The interval 190-492 (SSGFLNLERV…VAQFQNNSKL (303 aa)) is catalytic domain. N6-acetyllysine is present on lysine 210. An N6-succinyllysine modification is found at lysine 221. 298–304 (QGVELGT) serves as a coordination point for malonyl-CoA. Position 316 is an N6-acetyllysine (lysine 316). Serine 328 contributes to the malonyl-CoA binding site. The active-site Proton acceptor is the serine 328. Lysine 385 is modified (N6-acetyllysine; alternate). An N6-succinyllysine; alternate modification is found at lysine 385. At lysine 388 the chain carries N6-acetyllysine. A malonyl-CoA-binding site is contributed by histidine 422. The active-site Proton donor is the histidine 422. An N6-acetyllysine mark is found at lysine 441 and lysine 471. The Microbody targeting signal motif lies at 490–492 (SKL).

Homotetramer. Dimer of dimers. The two subunits within a dimer display conformational differences suggesting that at any given moment, only one of the two subunits is competent for malonyl-CoA binding and catalytic activity. Under oxidizing conditions, can form disulfide-linked homotetramers (in vitro). Associates with the peroxisomal targeting signal receptor PEX5. In terms of processing, interchain disulfide bonds may form in peroxisomes (Potential). Interchain disulfide bonds are not expected to form in the reducing environment of the cytoplasm and mitochondria. Post-translationally, acetylation at Lys-471 activates malonyl-CoA decarboxylase activity. Deacetylation at Lys-471 by SIRT4 represses activity, leading to promote lipogenesis.

It is found in the cytoplasm. The protein resides in the mitochondrion matrix. It localises to the peroxisome. Its subcellular location is the peroxisome matrix. The catalysed reaction is malonyl-CoA + H(+) = acetyl-CoA + CO2. The protein operates within metabolic intermediate biosynthesis; acetyl-CoA biosynthesis; acetyl-CoA from malonyl-CoA: step 1/1. With respect to regulation, malonyl-CoA decarboxylase activity does not require any cofactors or divalent metal ions. In terms of biological role, catalyzes the conversion of malonyl-CoA to acetyl-CoA. In the fatty acid biosynthesis MCD selectively removes malonyl-CoA and thus assures that methyl-malonyl-CoA is the only chain elongating substrate for fatty acid synthase and that fatty acids with multiple methyl side chains are produced. In peroxisomes it may be involved in degrading intraperoxisomal malonyl-CoA, which is generated by the peroxisomal beta-oxidation of odd chain-length dicarboxylic fatty acids. Plays a role in the metabolic balance between glucose and lipid oxidation in muscle independent of alterations in insulin signaling. Plays a role in controlling the extent of ischemic injury by promoting glucose oxidation. The polypeptide is Malonyl-CoA decarboxylase, mitochondrial (Mus musculus (Mouse)).